Reading from the N-terminus, the 40-residue chain is Natriuretic peptide HsNP-b (40 aa).

Positions 1–8 are excised as a propeptide; the sequence is SGSKTAKI. The disordered stretch occupies residues 1–40; sequence SGSKTAKIGDGCFGVPIDHIGSTTDLGCGRPRPKPTPRGS. C12 and C28 form a disulfide bridge. The span at 31-40 shows a compositional bias: basic residues; that stretch reads PRPKPTPRGS.

It belongs to the natriuretic peptide family. As to expression, expressed by the venom gland.

Its subcellular location is the secreted. Snake venom natriuretic peptide that targets both NPR1 and NPR2. Exhibits hypotensive and vasodepressor activities. This is Natriuretic peptide HsNP-b from Hoplocephalus stephensii (Stephens's banded snake).